The following is a 151-amino-acid chain: Methylglyoxal synthase (151 aa).

In terms of domain architecture, MGS-like spans 1–151 (MKKTTRTMAA…DYQAYLAERT (151 aa)). Substrate contacts are provided by residues histidine 19, lysine 23, 45 to 48 (TGTT), and 65 to 66 (SG). Residue aspartate 71 is the Proton donor/acceptor of the active site. Histidine 98 serves as a coordination point for substrate.

Belongs to the methylglyoxal synthase family.

It carries out the reaction dihydroxyacetone phosphate = methylglyoxal + phosphate. In terms of biological role, catalyzes the formation of methylglyoxal from dihydroxyacetone phosphate. The chain is Methylglyoxal synthase from Vibrio cholerae serotype O1 (strain ATCC 39541 / Classical Ogawa 395 / O395).